We begin with the raw amino-acid sequence, 587 residues long: Lamin-B1 (587 aa).

A compositionally biased stretch (polar residues) spans 1 to 11 (MATATPVQQRA). The interval 1-29 (MATATPVQQRAGSRASAPATPFSPTRLSR) is disordered. Ala2 is modified (N-acetylalanine). Residues 2–34 (ATATPVQQRAGSRASAPATPFSPTRLSRLQEKE) form a head region. Residues Thr3 and Thr5 each carry the phosphothreonine modification. Omega-N-methylarginine is present on Arg14. Residue Ser16 is modified to Phosphoserine. Thr20 bears the Phosphothreonine mark. The residue at position 23 (Ser23) is a Phosphoserine. At Thr25 the chain carries Phosphothreonine. Ser28 bears the Phosphoserine mark. Positions 32–388 (EKEELRELND…KLLEGEEERL (357 aa)) constitute an IF rod domain. The interval 35 to 69 (ELRELNDRLAVYIDKVRSLETENSALQLQVTEREE) is coil 1A. The tract at residues 70–81 (VRGRELTGLKAL) is linker 1. The coil 1B stretch occupies residues 82 to 215 (YETELADARR…EFRKNMYEEE (134 aa)). Residue Lys102 forms a Glycyl lysine isopeptide (Lys-Gly) (interchain with G-Cter in SUMO2) linkage. At Lys111 the chain carries N6-acetyllysine. Lys123 participates in a covalent cross-link: Glycyl lysine isopeptide (Lys-Gly) (interchain with G-Cter in SUMO2). A Phosphoserine modification is found at Ser126. Residue Lys145 forms a Glycyl lysine isopeptide (Lys-Gly) (interchain with G-Cter in SUMO2) linkage. Residue Lys157 is modified to N6-acetyllysine; alternate. Residue Lys157 forms a Glycyl lysine isopeptide (Lys-Gly) (interchain with G-Cter in SUMO2); alternate linkage. Ser158 carries the phosphoserine modification. A Glycyl lysine isopeptide (Lys-Gly) (interchain with G-Cter in SUMO2) cross-link involves residue Lys181. Residues Ser200 and Ser232 each carry the phosphoserine modification. Residues 216-243 (INETRRKHETRLVEVDSGRQIEYEYKLA) are linker 2. Glycyl lysine isopeptide (Lys-Gly) (interchain with G-Cter in SUMO2) cross-links involve residues Lys241 and Lys261. Residues 244–386 (QALHEMREQH…YRKLLEGEEE (143 aa)) are coil 2. The residue at position 271 (Lys271) is an N6-acetyllysine; alternate. Lys271 participates in a covalent cross-link: Glycyl lysine isopeptide (Lys-Gly) (interchain with G-Cter in SUMO2); alternate. Phosphoserine occurs at positions 278 and 302. Lys312 participates in a covalent cross-link: Glycyl lysine isopeptide (Lys-Gly) (interchain with G-Cter in SUMO2). Residue Lys330 is modified to N6-acetyllysine; alternate. Residue Lys330 forms a Glycyl lysine isopeptide (Lys-Gly) (interchain with G-Cter in SUMO2); alternate linkage. Residues Ser375 and Ser393 each carry the phosphoserine modification. A tail region spans residues 387 to 587 (RLKLSPSPSS…RASNKSCAIM (201 aa)). The span at 390–409 (LSPSPSSRVTVSRASSSRSV) shows a compositional bias: low complexity. A disordered region spans residues 390-432 (LSPSPSSRVTVSRASSSRSVRTTRGKRKRVDVEESEASSSVSI). Thr399 carries O-linked (GlcNAc) threonine glycosylation. Arg413 is subject to Omega-N-methylarginine. The Nuclear localization signal signature appears at 415 to 420 (KRKRVD). An LTD domain is found at 430–546 (VSISHSASAT…EEVAQRSTVF (117 aa)). Residue Lys483 is modified to N6-acetyllysine. Lys532 is covalently cross-linked (Glycyl lysine isopeptide (Lys-Gly) (interchain with G-Cter in SUMO2)). A Phosphoserine modification is found at Ser534. A Glycyl lysine isopeptide (Lys-Gly) (interchain with G-Cter in SUMO2) cross-link involves residue Lys547. The tract at residues 550–587 (IPEEEEEEEEEPIGVPLEEERFHQQGTPRASNKSCAIM) is disordered. The segment covering 551–561 (PEEEEEEEEEP) has biased composition (acidic residues). Residues 573–587 (QQGTPRASNKSCAIM) are compositionally biased toward polar residues. Phosphothreonine is present on Thr576. Residue Cys584 is modified to Cysteine methyl ester. The S-farnesyl cysteine moiety is linked to residue Cys584. Positions 585–587 (AIM) are cleaved as a propeptide — removed in mature form.

It belongs to the intermediate filament family. Homodimer. Lamin dimers then assemble into dimeric head-to-tail polymers. Ultimately, two head-to-tail polymers assemble laterally into a protofilament with a uniformly shaped rod of 3.5 nm in diameter. Interacts with SPAG4 and SEPT12. In terms of processing, B-type lamins undergo a series of modifications, such as farnesylation and phosphorylation. Increased phosphorylation of the lamins occurs before envelope disintegration and probably plays a role in regulating lamin associations. Phosphorylation plays a key role in lamin organization, subcellular localization and nuclear envelope disintegration. Phosphorylation by CDK1 at Ser-23 and Ser-393 at the onset of mitosis drives lamin disassembly and nuclear envelope breakdown.

It localises to the nucleus lamina. Functionally, lamins are intermediate filament proteins that assemble into a filamentous meshwork, and which constitute the major components of the nuclear lamina, a fibrous layer on the nucleoplasmic side of the inner nuclear membrane. Lamins provide a framework for the nuclear envelope, bridging the nuclear envelope and chromatin, thereby playing an important role in nuclear assembly, chromatin organization, nuclear membrane and telomere dynamics. The structural integrity of the lamina is strictly controlled by the cell cycle, as seen by the disintegration and formation of the nuclear envelope in prophase and telophase, respectively. The protein is Lamin-B1 (Lmnb1) of Rattus norvegicus (Rat).